A 212-amino-acid polypeptide reads, in one-letter code: NADH dehydrogenase [ubiquinone] iron-sulfur protein 8, mitochondrial (212 aa).

A mitochondrion-targeting transit peptide spans 1–36 (MRCLTMPMLLRALAQAQAARAGHASVRGLHSSAVAA). 4Fe-4S ferredoxin-type domains follow at residues 104–133 (RRYPSGEERCIACKLCEAVCPAQAITIEAE) and 143–172 (TRYDIDMTKCIYCGFCQEACPVDAIVEGPN). [4Fe-4S] cluster contacts are provided by Cys-113, Cys-116, Cys-119, Cys-123, Cys-152, Cys-155, Cys-158, and Cys-162.

Belongs to the complex I 23 kDa subunit family. Core subunit of respiratory chain NADH dehydrogenase (Complex I) which is composed of 45 different subunits. This is a component of the iron-sulfur (IP) fragment of the enzyme. Interacts with RAB5IF. Requires [4Fe-4S] cluster as cofactor.

It is found in the mitochondrion inner membrane. The enzyme catalyses a ubiquinone + NADH + 5 H(+)(in) = a ubiquinol + NAD(+) + 4 H(+)(out). Core subunit of the mitochondrial membrane respiratory chain NADH dehydrogenase (Complex I) which catalyzes electron transfer from NADH through the respiratory chain, using ubiquinone as an electron acceptor. Essential for the catalytic activity and assembly of complex I. In Bos taurus (Bovine), this protein is NADH dehydrogenase [ubiquinone] iron-sulfur protein 8, mitochondrial (NDUFS8).